Here is a 647-residue protein sequence, read N- to C-terminus: Putative ankyrin repeat protein L764 (647 aa).

ANK repeat units follow at residues 123–154 (LKDR…QINL), 202–231 (LTQE…EYDL), 233–256 (EIIN…SLNE), 258–284 (NVNI…TINS), 289–319 (SMFS…DLTV), 348–377 (DCNL…DLKK), 401–431 (NDVN…NIDL), 529–558 (FILK…DNNE), and 588–617 (NGQN…DVKN).

This chain is Putative ankyrin repeat protein L764, found in Acanthamoeba polyphaga (Amoeba).